A 328-amino-acid chain; its full sequence is Malate dehydrogenase (328 aa).

11-17 (GAAGQIG) provides a ligand contact to NAD(+). Residues Arg94 and Arg100 each coordinate substrate. Residues Asn107, Gln114, and 131–133 (VGN) each bind NAD(+). Residues Asn133 and Arg164 each coordinate substrate. His189 acts as the Proton acceptor in catalysis.

The protein belongs to the LDH/MDH superfamily. MDH type 2 family.

It carries out the reaction (S)-malate + NAD(+) = oxaloacetate + NADH + H(+). Catalyzes the reversible oxidation of malate to oxaloacetate. This Acinetobacter baumannii (strain AB0057) protein is Malate dehydrogenase.